A 176-amino-acid polypeptide reads, in one-letter code: Peptidyl-prolyl cis-trans isomerase cyp5 (176 aa).

Positions 10–173 constitute a PPIase cyclophilin-type domain; that stretch reads FFDVAVNGKP…AKVEIVDCGE (164 aa).

Belongs to the cyclophilin-type PPIase family.

It carries out the reaction [protein]-peptidylproline (omega=180) = [protein]-peptidylproline (omega=0). PPIases accelerate the folding of proteins. It catalyzes the cis-trans isomerization of proline imidic peptide bonds in oligopeptides. The protein is Peptidyl-prolyl cis-trans isomerase cyp5 (cyp5) of Rhizopus delemar (strain RA 99-880 / ATCC MYA-4621 / FGSC 9543 / NRRL 43880) (Mucormycosis agent).